A 317-amino-acid polypeptide reads, in one-letter code: Taste receptor type 2 member 14 (317 aa).

At 1 to 7 the chain is on the extracellular side; it reads MGDVIKS. The chain crosses the membrane as a helical span at residues 8–28; the sequence is IFTFVLIVEFIIGNLGNSFIA. At 29–55 the chain is on the cytoplasmic side; the sequence is LVNCIDWVKGRKISSVDQILTALAISR. Residues 56–76 traverse the membrane as a helical segment; the sequence is ISLVWLIFGSWCVSVFLPALF. At 77–87 the chain is on the extracellular side; the sequence is ATEKMFRMLTN. Cholesterol contacts are provided by threonine 86 and tryptophan 89. The helical transmembrane segment at 88-108 threads the bilayer; it reads IWTVINHFSVWLATGLGTFYF. Residues 109–129 are Cytoplasmic-facing; sequence LKIANFSNSIFLYLKWRVKKV. The helical transmembrane segment at 130-150 threads the bilayer; that stretch reads VLVLLLVTSVFLFLNIALINI. At 151–184 the chain is on the extracellular side; it reads HINASINGYRRNKTCSSDSSNFTRFSSLIVLTST. N-linked (GlcNAc...) asparagine glycosylation is found at asparagine 153, asparagine 162, and asparagine 171. Cholesterol is bound at residue valine 180. The helical transmembrane segment at 185–205 threads the bilayer; it reads VFIFIPFTLSLAMFLLLIFSL. Residues 206–232 lie on the Cytoplasmic side of the membrane; that stretch reads WKHRKKMQHXVKRSGDASTKAHRGVKS. A helical membrane pass occupies residues 233–253; that stretch reads VITFFLLYAIFCLSFFISVWT. The Extracellular segment spans residues 254–261; it reads SERLEENL. The helical transmembrane segment at 262-282 threads the bilayer; it reads IILSQVMGMAYPSCHSCVLIL. Residues serine 265 and methionine 268 each contribute to the cholesterol site. The Cytoplasmic portion of the chain corresponds to 283–317; that stretch reads GNKKLRQASLSVLLWLRYMFKDGEPSGHKEFRESS.

Belongs to the G-protein coupled receptor T2R family. As to quaternary structure, core component of the TAS2R14-GNAI1 complex, consisting of TAS2R14, GNAI1, GNB1 and GNG2; within the complex interacts with GNAI1. Core component of the TAS2R14-GNAT3 complex, consisting of TAS2R14, GNAT3, GNB1 and GNG2; within the complex interacts with GNAT3. Core component of the TAS2R14-GNAS2 complex, consisting of TAS2R14, GNAS2, GNB1 and GNG2; within the complex interacts with GNAS2.

Its subcellular location is the membrane. The catalysed reaction is Ca(2+)(in) = Ca(2+)(out). It carries out the reaction 3',5'-cyclic AMP(in) = 3',5'-cyclic AMP(out). With respect to regulation, basal activity is enhanced by binding to bitter tastants, such as flufenamic acid and aristolochic acid. Regulated by cholesterol in a concentration-dependent manner. Functionally, gustducin-linked G-protein coupled receptor that plays a role in the perception of bitterness. The activity of this receptor stimulates GNAT3, activating the gustducin G-protein pathway. Likely plays a role in sensing the chemical composition of the gastrointestinal content and other extra-oral tissues via the inhibitory G-protein pathways. This Gorilla gorilla gorilla (Western lowland gorilla) protein is Taste receptor type 2 member 14 (TAS2R14).